The chain runs to 153 residues: Endoribonuclease YbeY (153 aa).

Zn(2+) contacts are provided by His112, His116, and His122.

Belongs to the endoribonuclease YbeY family. It depends on Zn(2+) as a cofactor.

The protein localises to the cytoplasm. Functionally, single strand-specific metallo-endoribonuclease involved in late-stage 70S ribosome quality control and in maturation of the 3' terminus of the 16S rRNA. The protein is Endoribonuclease YbeY of Persephonella marina (strain DSM 14350 / EX-H1).